A 198-amino-acid chain; its full sequence is Recombination protein RecR (198 aa).

Residues 58-73 (CSICGNYTDSDPCAIC) form a C4-type zinc finger. Residues 81-175 (SIICVIEQPK…KVTRIAHGVP (95 aa)) enclose the Toprim domain.

This sequence belongs to the RecR family.

May play a role in DNA repair. It seems to be involved in an RecBC-independent recombinational process of DNA repair. It may act with RecF and RecO. The chain is Recombination protein RecR from Clostridium novyi (strain NT).